The sequence spans 489 residues: Rhamnulokinase (489 aa).

13–17 (ASSGR) provides a ligand contact to ATP. An intrachain disulfide couples Cys68 to Cys222. Substrate contacts are provided by residues Gly83 and 236 to 238 (HDT). The active-site Proton acceptor is the Asp237. Thr259 is a binding site for ATP. Asn296 contacts substrate. Gln304 contributes to the ATP binding site. A disulfide bridge connects residues Cys353 and Cys370. Gly402 serves as a coordination point for ATP. A disulfide bridge connects residues Cys413 and Cys417.

It belongs to the rhamnulokinase family. As to quaternary structure, monomer. Mg(2+) serves as cofactor.

It catalyses the reaction L-rhamnulose + ATP = L-rhamnulose 1-phosphate + ADP + H(+). The protein operates within carbohydrate degradation; L-rhamnose degradation; glycerone phosphate from L-rhamnose: step 2/3. Functionally, involved in the catabolism of L-rhamnose (6-deoxy-L-mannose). Catalyzes the transfer of the gamma-phosphate group from ATP to the 1-hydroxyl group of L-rhamnulose to yield L-rhamnulose 1-phosphate. The protein is Rhamnulokinase of Escherichia coli O157:H7.